Here is a 351-residue protein sequence, read N- to C-terminus: Bifunctional UDP-glucose 4-epimerase and UDP-xylose 4-epimerase 3 (351 aa).

Residue 8–39 (NILVTGGAGFIGTHTVVQLLNQGFKVTIIDNL) participates in NAD(+) binding. S134 is a binding site for substrate. Residue Y158 is the Proton acceptor of the active site.

This sequence belongs to the NAD(P)-dependent epimerase/dehydratase family. Homodimer. Heterodimer. Requires NAD(+) as cofactor. As to expression, ubiquitous.

It carries out the reaction UDP-alpha-D-glucose = UDP-alpha-D-galactose. The catalysed reaction is UDP-beta-L-arabinopyranose = UDP-alpha-D-xylose. It participates in carbohydrate metabolism; galactose metabolism. It functions in the pathway nucleotide-sugar biosynthesis; UDP-L-arabinose biosynthesis; UDP-L-arabinose from UDP-alpha-D-xylose: step 1/1. The protein operates within cell wall biogenesis; cell wall polysaccharide biosynthesis. Strongly inhibited by UDP. Catalyzes the interconversion between UDP-glucose and UDP-galactose and the interconversion between UDP-arabinose and UDP-xylose. Cooperates with UGE2 in pollen development. May preferentially act in the UDP-galactose to UDP-glucose direction, therefore displaying a role in carbohydrate catabolism. The protein is Bifunctional UDP-glucose 4-epimerase and UDP-xylose 4-epimerase 3 (UGE3) of Arabidopsis thaliana (Mouse-ear cress).